We begin with the raw amino-acid sequence, 87 residues long: Lipid-anchored plasma membrane protein uvi15 (87 aa).

Residues 1–64 form a disordered region; the sequence is MSAQQFYGDK…MYVQQPQASD (64 aa). A compositionally biased stretch (low complexity) spans 18 to 41; the sequence is QQAYGGPNYYPPQQNYPQQGYAPP.

The protein belongs to the CYSTM1 family. In terms of processing, palmitoylated.

Its subcellular location is the cell membrane. The protein localises to the cell tip. Its function is as follows. Required for the maintenance of viability of cells in stationary phase and in starvation conditions. This is Lipid-anchored plasma membrane protein uvi15 (uvi15) from Schizosaccharomyces pombe (strain 972 / ATCC 24843) (Fission yeast).